Here is a 522-residue protein sequence, read N- to C-terminus: METAVAYYKDGVPYDDKGQVIITLLNGTPDGSGSGGGGGKGGSKSESSAAIHATAKWSTAQLKKTQAEQAARAKAAAEAQAKAKANRDALTQRLKDIVNEALRHNASRTPSATELAHANNAAMQAEDERLRLAKAEEKARKEAEAAEKAFQEAEQRRKEIEREKAETERQLKLAEAEEKRLAALSEEAKAVEIAQKKLSAAQSEVVKMDGEIKTLNSRLSSSIHARDAEMKTLAGKRNELAQASAKYKELDELVKKLSPRANDPLQNRPFFEATRRRVGAGKIREEKQKQVTASETRINRINADITQIQKAISQVSNNRNAGIARVHEAEENLKKAQNNLLNSQIKDAVDATVSFYQTLTEKYGEKYSKMAQELADKSKGKKIGNVNEALAAFEKYKDVLNKKFSKADRDAIFNALASVKYDDWAKHLDQFAKYLKITGHVSFGYDVVSDILKIKDTGDWKPLFLTLEKKAADAGVSYVVALLFSLLAGTTLGIWGIAIVTGILCSYIDKNKLNTINEVLGI.

Disordered regions lie at residues 26–52 and 136–165; these read NGTP…AAIH and EEKA…REKA. Positions 30–42 are enriched in gly residues; the sequence is DGSGSGGGGGKGG. A run of 2 helical transmembrane segments spans residues 471 to 487 and 494 to 510; these read AADA…FSLL and IWGI…YIDK.

Belongs to the channel forming colicin family.

The protein localises to the cell membrane. Functionally, this colicin is a channel-forming colicin. This class of transmembrane toxins depolarize the cytoplasmic membrane, leading to dissipation of cellular energy. Colicins are polypeptide toxins produced by and active against E.coli and closely related bacteria. The polypeptide is Colicin-E1 (cea) (Escherichia coli).